The primary structure comprises 469 residues: Adenosylhomocysteinase (469 aa).

Positions 63, 139, and 164 each coordinate substrate. 165-167 lines the NAD(+) pocket; that stretch reads TTT. 2 residues coordinate substrate: lysine 194 and aspartate 198. Residues asparagine 199, 228-233, glutamate 251, asparagine 300, 321-323, and asparagine 375 each bind NAD(+); these read GYGDVG and IGH.

This sequence belongs to the adenosylhomocysteinase family. It depends on NAD(+) as a cofactor.

It is found in the cytoplasm. The catalysed reaction is S-adenosyl-L-homocysteine + H2O = L-homocysteine + adenosine. It participates in amino-acid biosynthesis; L-homocysteine biosynthesis; L-homocysteine from S-adenosyl-L-homocysteine: step 1/1. In terms of biological role, may play a key role in the regulation of the intracellular concentration of adenosylhomocysteine. In Pseudomonas syringae pv. tomato (strain ATCC BAA-871 / DC3000), this protein is Adenosylhomocysteinase.